A 304-amino-acid chain; its full sequence is Ribosomal RNA small subunit methyltransferase H (304 aa).

S-adenosyl-L-methionine is bound by residues Gly47 to His49, Asp66, Phe93, Asp108, and Gln115.

It belongs to the methyltransferase superfamily. RsmH family.

It is found in the cytoplasm. It catalyses the reaction cytidine(1402) in 16S rRNA + S-adenosyl-L-methionine = N(4)-methylcytidine(1402) in 16S rRNA + S-adenosyl-L-homocysteine + H(+). Functionally, specifically methylates the N4 position of cytidine in position 1402 (C1402) of 16S rRNA. The chain is Ribosomal RNA small subunit methyltransferase H from Prochlorococcus marinus (strain NATL2A).